Consider the following 206-residue polypeptide: Cytidylate kinase (206 aa).

7–15 (GPAASGKGT) contacts ATP.

Belongs to the cytidylate kinase family. Type 1 subfamily.

It is found in the cytoplasm. It catalyses the reaction CMP + ATP = CDP + ADP. The catalysed reaction is dCMP + ATP = dCDP + ADP. This chain is Cytidylate kinase, found in Azorhizobium caulinodans (strain ATCC 43989 / DSM 5975 / JCM 20966 / LMG 6465 / NBRC 14845 / NCIMB 13405 / ORS 571).